The primary structure comprises 101 residues: Small ribosomal subunit protein uS10 (101 aa).

Belongs to the universal ribosomal protein uS10 family. In terms of assembly, part of the 30S ribosomal subunit.

Involved in the binding of tRNA to the ribosomes. The polypeptide is Small ribosomal subunit protein uS10 (Anaeromyxobacter dehalogenans (strain 2CP-C)).